A 299-amino-acid polypeptide reads, in one-letter code: ATP phosphoribosyltransferase (299 aa).

The protein belongs to the ATP phosphoribosyltransferase family. Long subfamily. In terms of assembly, equilibrium between an active dimeric form, an inactive hexameric form and higher aggregates. Interconversion between the various forms is largely reversible and is influenced by the natural substrates and inhibitors of the enzyme. Mg(2+) serves as cofactor.

It is found in the cytoplasm. It carries out the reaction 1-(5-phospho-beta-D-ribosyl)-ATP + diphosphate = 5-phospho-alpha-D-ribose 1-diphosphate + ATP. It participates in amino-acid biosynthesis; L-histidine biosynthesis; L-histidine from 5-phospho-alpha-D-ribose 1-diphosphate: step 1/9. Its activity is regulated as follows. Feedback inhibited by histidine. Catalyzes the condensation of ATP and 5-phosphoribose 1-diphosphate to form N'-(5'-phosphoribosyl)-ATP (PR-ATP). Has a crucial role in the pathway because the rate of histidine biosynthesis seems to be controlled primarily by regulation of HisG enzymatic activity. This chain is ATP phosphoribosyltransferase, found in Salmonella agona (strain SL483).